A 532-amino-acid chain; its full sequence is MESSPDPGELIKSSQPSFFEFQKQASLMTSCNLLWKELSEHFTSMEQNLMKKSEALRQMIETLDNQTQSSIELLKHREVTIDHSVEIAEGKVEERVRAALDSLEKARDCGDEDTGEVDDGDGLLSALKSLCLKMDARGFWGFVIARKKELENLRSQIPVALVDCVDPPKLVLEAVSEVFPVDKRGGGEKVSNDFGWACVVILESLIPVMVDPVMGKSRLLVTPSVKEKAKEIAETWKASLEERGGIENVKTPDVHTFLQHLVTFGIVKKDDLALYRKLVVGSAWRKQMPKLAVSVGLGDQMPDMIEELIIRGQQLDAVHFTFEVGLVHLFPPVPLLKAYLRDAKKATALITDDSNNSGRSAHLVARKEQSALRAVLKCIEEYKLEEEFPPENLKKRLDQLEKTKTEKRKPAVIPANKRTRASYSGPMPPAKAGRITNAYVSSFPPPPPTFIRSQSHSPQYGVPAYTTSPPTIYSNRSPPYQYSPEAVHGSYQTSPVSYPTAYGTYCSPVAAPPPPVYHPHPHHHHHIQHAYY.

It belongs to the Frigida family. In terms of tissue distribution, expressed in leaves, shoot apex, flowers and during seed development.

This Arabidopsis thaliana (Mouse-ear cress) protein is FRIGIDA-like protein 4b (FRL4B).